Here is a 217-residue protein sequence, read N- to C-terminus: Protein-L-isoaspartate O-methyltransferase (217 aa).

Ser59 is an active-site residue.

It belongs to the methyltransferase superfamily. L-isoaspartyl/D-aspartyl protein methyltransferase family.

It is found in the cytoplasm. The enzyme catalyses [protein]-L-isoaspartate + S-adenosyl-L-methionine = [protein]-L-isoaspartate alpha-methyl ester + S-adenosyl-L-homocysteine. Catalyzes the methyl esterification of L-isoaspartyl residues in peptides and proteins that result from spontaneous decomposition of normal L-aspartyl and L-asparaginyl residues. It plays a role in the repair and/or degradation of damaged proteins. This chain is Protein-L-isoaspartate O-methyltransferase (pcm), found in Methanothermobacter thermautotrophicus (strain ATCC 29096 / DSM 1053 / JCM 10044 / NBRC 100330 / Delta H) (Methanobacterium thermoautotrophicum).